Reading from the N-terminus, the 361-residue chain is Rho-GTPase-activating protein 5 (361 aa).

One can recognise a Rho-GAP domain in the interval 52–245 (IFLTRRDGEK…FLINHQGSFI (194 aa)). A compositionally biased stretch (low complexity) spans 306-323 (SSATYSNSPSSNFSNMKS). Residues 306–345 (SSATYSNSPSSNFSNMKSSEVDPGSPPRIKSRSYSLSRSS) form a disordered region.

The protein resides in the membrane. Functionally, GTPase-activating protein for Rho1. Has a role in the negative regulation of (1-3)beta-D-glucan synthase activity and cell integrity. In Schizosaccharomyces pombe (strain 972 / ATCC 24843) (Fission yeast), this protein is Rho-GTPase-activating protein 5 (rga5).